Consider the following 58-residue polypeptide: Small ribosomal subunit protein bS21 (58 aa).

The tract at residues 35-58 is disordered; sequence REHYEKPSVKKKKKSEAARKRKFK. The span at 43–58 shows a compositional bias: basic residues; the sequence is VKKKKKSEAARKRKFK.

The protein belongs to the bacterial ribosomal protein bS21 family.

The polypeptide is Small ribosomal subunit protein bS21 (Clostridium botulinum (strain Alaska E43 / Type E3)).